The chain runs to 745 residues: MAPPPNTYSESWWGGKEERGTPVVVKMDNPYSLVEIDGPGMAAPSEKARGKNAKQLTWVLLLRAHRAVGCVAWLAAGFWAVLGAVNRRVRRSRDADAEPDAEASGRGRAMLRFLRGFLLLSLAMLAFETVAHLKGWHFPRSAAGLPEKYLRRLPEHLQHLPEHLRRHLPEHLRMPEKEEIEGWLHRAYVAWLAFRIDYIAWAIQKLSGFCIALFMVQSVDRLVLCLGCFWIKLRGIKPVADTSISNDDIEATAGDGGGYFPMVLIQMPMCNEKEVYETSISHVCQIDWPRERMLVQVLDDSDDETCQMLIKAEVTKWSQRGVNIIYRHRLNRTGYKAGNLKSAMSCDYVRDYEFVAIFDADFQPNPDFLKLTVPHFKGNPELGLVQARWSFVNKDENLLTRLQNINLCFHFEVEQQVNGVYLSFFGFNGTAGVWRIKALEDSGGWMERTTVEDMDIAVRAHLNGWKFIFLNDVKVLCELPESYQAYRKQQHRWHSGPMQLFRLCLPAVFKSKISTWKKANLVMLFFLLRKLILPFYSFTLFCVILPLTMFVPEAELPIWVICYVPVIMSVLNILPAPKSFPFVIPYLLFENTMSVTKFNAMVSGLFQLGSSYEWVVTKKAGRTSSESDILALAEAADADARPPPAKLHRGVSEGGLKEWAKLHKEQEDATAAAAAAAAPGTPVKKSKAAKAPNRIFKKELALAFLLLTAATRSLLSAQGLHFYFLLFQGVTFLAVGLDLIGEQVS.

Helical transmembrane passes span glycine 116 to tryptophan 136 and isoleucine 196 to valine 216. Aspartate 300 is a catalytic residue. Substrate-binding residues include aspartate 359 and aspartate 361. Aspartate 453 is a catalytic residue. Helical transmembrane passes span leucine 531–valine 551, leucine 556–alanine 576, isoleucine 695–leucine 715, and leucine 720–isoleucine 740.

It belongs to the glycosyltransferase 2 family. Plant cellulose synthase-like C subfamily.

Its subcellular location is the golgi apparatus membrane. Its function is as follows. Probable beta-1,4-glucan synthase rather involved in the synthesis of the xyloglucan backbone than cellulose. Seems to work simultaneously with xyloglucan 6-xylosyltransferase. Xyloglucan is a noncellulosic polysaccharides of plant cell wall and consists of a glucan backbone substituted by xylose, galactose and fucose. The sequence is that of Probable xyloglucan glycosyltransferase 3 (CSLC3) from Oryza sativa subsp. japonica (Rice).